The following is a 185-amino-acid chain: Probable chorismate pyruvate-lyase 1 (185 aa).

Arg-70, Leu-108, and Glu-166 together coordinate substrate.

This sequence belongs to the UbiC family.

It is found in the cytoplasm. It catalyses the reaction chorismate = 4-hydroxybenzoate + pyruvate. It participates in cofactor biosynthesis; ubiquinone biosynthesis. Functionally, removes the pyruvyl group from chorismate, with concomitant aromatization of the ring, to provide 4-hydroxybenzoate (4HB) for the ubiquinone pathway. This chain is Probable chorismate pyruvate-lyase 1, found in Pseudomonas fluorescens (strain Pf0-1).